The chain runs to 24 residues: Superoxide dismutase [Cu-Zn] (24 aa).

This sequence belongs to the Cu-Zn superoxide dismutase family. In terms of assembly, homodimer. Cu cation is required as a cofactor. Zn(2+) serves as cofactor.

The protein localises to the cytoplasm. The catalysed reaction is 2 superoxide + 2 H(+) = H2O2 + O2. Destroys radicals which are normally produced within the cells and which are toxic to biological systems. This is Superoxide dismutase [Cu-Zn] (sod1) from Aquarana catesbeiana (American bullfrog).